Consider the following 102-residue polypeptide: Small ribosomal subunit protein uS10 (102 aa).

Belongs to the universal ribosomal protein uS10 family. As to quaternary structure, part of the 30S ribosomal subunit.

In terms of biological role, involved in the binding of tRNA to the ribosomes. This is Small ribosomal subunit protein uS10 from Methanothermobacter thermautotrophicus (strain ATCC 29096 / DSM 1053 / JCM 10044 / NBRC 100330 / Delta H) (Methanobacterium thermoautotrophicum).